Reading from the N-terminus, the 490-residue chain is Ribulose bisphosphate carboxylase large chain (490 aa).

Substrate is bound by residues asparagine 127 and threonine 177. Catalysis depends on lysine 179, which acts as the Proton acceptor. Lysine 181 provides a ligand contact to substrate. Mg(2+) contacts are provided by lysine 205, aspartate 207, and glutamate 208. Lysine 205 is subject to N6-carboxylysine. The Proton acceptor role is filled by histidine 297. Positions 298, 330, and 382 each coordinate substrate.

This sequence belongs to the RuBisCO large chain family. Type I subfamily. In terms of assembly, heterohexadecamer of 8 large chains and 8 small chains. The cofactor is Mg(2+).

It is found in the plastid. The protein resides in the chloroplast. It catalyses the reaction 2 (2R)-3-phosphoglycerate + 2 H(+) = D-ribulose 1,5-bisphosphate + CO2 + H2O. The enzyme catalyses D-ribulose 1,5-bisphosphate + O2 = 2-phosphoglycolate + (2R)-3-phosphoglycerate + 2 H(+). Functionally, ruBisCO catalyzes two reactions: the carboxylation of D-ribulose 1,5-bisphosphate, the primary event in carbon dioxide fixation, as well as the oxidative fragmentation of the pentose substrate in the photorespiration process. Both reactions occur simultaneously and in competition at the same active site. This chain is Ribulose bisphosphate carboxylase large chain, found in Phaeodactylum tricornutum (strain CCAP 1055/1).